Reading from the N-terminus, the 76-residue chain is MAKLLCSYLFICMFVLSGFLVFSSAKQLKTCTSVIKLGHPCDIESCLNECFRVYNTGFATCRGDKYSQLCTCEYNC.

The first 25 residues, 1-25 (MAKLLCSYLFICMFVLSGFLVFSSA), serve as a signal peptide directing secretion. Disulfide bonds link Cys-31-Cys-76, Cys-41-Cys-61, Cys-46-Cys-70, and Cys-50-Cys-72.

The protein belongs to the DEFL family.

It is found in the secreted. This chain is Defensin-like protein 164 (LCR38), found in Arabidopsis thaliana (Mouse-ear cress).